We begin with the raw amino-acid sequence, 35 residues long: Surfactant protein C (35 aa).

Residues Cys-5 and Cys-6 are each lipidated (S-palmitoyl cysteine).

It is found in the secreted. The protein resides in the extracellular space. It localises to the surface film. Pulmonary surfactant associated proteins promote alveolar stability by lowering the surface tension at the air-liquid interface in the peripheral air spaces. The sequence is that of Surfactant protein C (SFTPC) from Sus scrofa (Pig).